The chain runs to 485 residues: Glutamyl-tRNA(Gln) amidotransferase subunit A (485 aa).

Catalysis depends on charge relay system residues K76 and S152. Catalysis depends on S176, which acts as the Acyl-ester intermediate.

This sequence belongs to the amidase family. GatA subfamily. As to quaternary structure, heterotrimer of A, B and C subunits.

It catalyses the reaction L-glutamyl-tRNA(Gln) + L-glutamine + ATP + H2O = L-glutaminyl-tRNA(Gln) + L-glutamate + ADP + phosphate + H(+). Functionally, allows the formation of correctly charged Gln-tRNA(Gln) through the transamidation of misacylated Glu-tRNA(Gln) in organisms which lack glutaminyl-tRNA synthetase. The reaction takes place in the presence of glutamine and ATP through an activated gamma-phospho-Glu-tRNA(Gln). The polypeptide is Glutamyl-tRNA(Gln) amidotransferase subunit A (Dechloromonas aromatica (strain RCB)).